A 95-amino-acid chain; its full sequence is IgNAR transmembrane form NE (95 aa).

One can recognise an Ig-like domain in the interval 1 to 36; the sequence is LTFSTRSLLNLPAVEWKSGAKYTCTASHSPSQSTVK. Positions 24–35 are enriched in polar residues; sequence CTASHSPSQSTV. A disordered region spans residues 24-79; the sequence is CTASHSPSQSTVKRVIRNPKESPKGSSETRKSPLEIMESPEDYGTEEDQLENVNED. The span at 41-56 shows a compositional bias: basic and acidic residues; that stretch reads NPKESPKGSSETRKSP. The segment covering 61 to 77 has biased composition (acidic residues); the sequence is ESPEDYGTEEDQLENVN. The N-linked (GlcNAc...) asparagine glycan is linked to N81.

Expressed mainly in lymphoid tissues including spleen, epigonal organ and circulating lymphocytes. Also expressed at low levels in the pancreas.

This is IgNAR transmembrane form NE from Ginglymostoma cirratum (Nurse shark).